A 272-amino-acid chain; its full sequence is Energy-coupling factor transporter ATP-binding protein EcfA1 (272 aa).

An ABC transporter domain is found at Ile-2–Asp-237. Gly-37 to Ser-44 provides a ligand contact to ATP.

It belongs to the ABC transporter superfamily. Energy-coupling factor EcfA family. In terms of assembly, forms a stable energy-coupling factor (ECF) transporter complex composed of 2 membrane-embedded substrate-binding proteins (S component), 2 ATP-binding proteins (A component) and 2 transmembrane proteins (T component).

It localises to the cell membrane. Its function is as follows. ATP-binding (A) component of a common energy-coupling factor (ECF) ABC-transporter complex. Unlike classic ABC transporters this ECF transporter provides the energy necessary to transport a number of different substrates. The chain is Energy-coupling factor transporter ATP-binding protein EcfA1 from Mesomycoplasma hyopneumoniae (strain 7448) (Mycoplasma hyopneumoniae).